A 343-amino-acid chain; its full sequence is Aspartate carbamoyltransferase catalytic subunit (343 aa).

2 residues coordinate carbamoyl phosphate: Arg-91 and Thr-92. L-aspartate is bound at residue Lys-119. Carbamoyl phosphate is bound by residues Arg-141, His-171, and Gln-174. The L-aspartate site is built by Arg-204 and Arg-259. Gly-300 and Pro-301 together coordinate carbamoyl phosphate.

Belongs to the aspartate/ornithine carbamoyltransferase superfamily. ATCase family. Heterododecamer (2C3:3R2) of six catalytic PyrB chains organized as two trimers (C3), and six regulatory PyrI chains organized as three dimers (R2).

The catalysed reaction is carbamoyl phosphate + L-aspartate = N-carbamoyl-L-aspartate + phosphate + H(+). Its pathway is pyrimidine metabolism; UMP biosynthesis via de novo pathway; (S)-dihydroorotate from bicarbonate: step 2/3. Catalyzes the condensation of carbamoyl phosphate and aspartate to form carbamoyl aspartate and inorganic phosphate, the committed step in the de novo pyrimidine nucleotide biosynthesis pathway. The protein is Aspartate carbamoyltransferase catalytic subunit of Burkholderia cenocepacia (strain HI2424).